A 208-amino-acid polypeptide reads, in one-letter code: Uridine kinase (208 aa).

Gly-11–Ser-18 provides a ligand contact to ATP.

Belongs to the uridine kinase family.

It localises to the cytoplasm. The catalysed reaction is uridine + ATP = UMP + ADP + H(+). It catalyses the reaction cytidine + ATP = CMP + ADP + H(+). The protein operates within pyrimidine metabolism; CTP biosynthesis via salvage pathway; CTP from cytidine: step 1/3. It functions in the pathway pyrimidine metabolism; UMP biosynthesis via salvage pathway; UMP from uridine: step 1/1. In Clostridium novyi (strain NT), this protein is Uridine kinase.